Reading from the N-terminus, the 218-residue chain is Very-long-chain (3R)-3-hydroxyacyl-CoA dehydratase hpo-8 (218 aa).

The next 5 membrane-spanning stretches (helical) occupy residues 15–35 (ILGW…GLTW), 44–64 (FELK…IVGL), 86–106 (ILHL…LVAW), 137–157 (LFYV…FASL), and 176–196 (MGIS…PGFP). Active-site residues include Tyr142 and Glu149.

This sequence belongs to the very long-chain fatty acids dehydratase HACD family.

It localises to the membrane. It carries out the reaction a very-long-chain (3R)-3-hydroxyacyl-CoA = a very-long-chain (2E)-enoyl-CoA + H2O. It participates in lipid metabolism; fatty acid biosynthesis. Catalyzes the third of the four reactions of the long-chain fatty acids elongation cycle. This endoplasmic reticulum-bound enzymatic process, allows the addition of two carbons to the chain of long- and very long-chain fatty acids/VLCFAs per cycle. This enzyme catalyzes the dehydration of the 3-hydroxyacyl-CoA intermediate into trans-2,3-enoyl-CoA, within each cycle of fatty acid elongation. Thereby, it participates in the production of VLCFAs of different chain lengths that are involved in multiple biological processes as precursors of membrane lipids and lipid mediators. The sequence is that of Very-long-chain (3R)-3-hydroxyacyl-CoA dehydratase hpo-8 (hpo-8) from Caenorhabditis elegans.